An 82-amino-acid polypeptide reads, in one-letter code: MGRRKSKRKPPPKRKNIEPLDQQFNCPFCNHEKSCEVKMDKSRNTAKITCRVCLEDFQTGINFLSEPIDVYNDWVDACETAN.

Zn(2+)-binding residues include Cys26, Cys29, Cys50, and Cys53.

The protein belongs to the ELOF1 family.

The protein resides in the nucleus. Functionally, transcription elongation factor implicated in the maintenance of proper chromatin structure in actively transcribed regions. This Drosophila melanogaster (Fruit fly) protein is Transcription elongation factor 1 homolog.